A 121-amino-acid polypeptide reads, in one-letter code: Holo-[acyl-carrier-protein] synthase (121 aa).

Mg(2+) contacts are provided by D8 and E58.

This sequence belongs to the P-Pant transferase superfamily. AcpS family. Requires Mg(2+) as cofactor.

It is found in the cytoplasm. It carries out the reaction apo-[ACP] + CoA = holo-[ACP] + adenosine 3',5'-bisphosphate + H(+). Functionally, transfers the 4'-phosphopantetheine moiety from coenzyme A to a Ser of acyl-carrier-protein. This is Holo-[acyl-carrier-protein] synthase from Bacillus pumilus (strain SAFR-032).